Here is a 425-residue protein sequence, read N- to C-terminus: UDP-N-acetylglucosamine 1-carboxyvinyltransferase (425 aa).

31 to 32 is a binding site for phosphoenolpyruvate; it reads KN. Residue Arg-100 coordinates UDP-N-acetyl-alpha-D-glucosamine. The Proton donor role is filled by Cys-124. Cys-124 bears the 2-(S-cysteinyl)pyruvic acid O-phosphothioketal mark. UDP-N-acetyl-alpha-D-glucosamine contacts are provided by residues 129–133, 170–172, Asp-311, and Ile-333; these read RPIDQ and TVT.

The protein belongs to the EPSP synthase family. MurA subfamily.

The protein resides in the cytoplasm. The enzyme catalyses phosphoenolpyruvate + UDP-N-acetyl-alpha-D-glucosamine = UDP-N-acetyl-3-O-(1-carboxyvinyl)-alpha-D-glucosamine + phosphate. It functions in the pathway cell wall biogenesis; peptidoglycan biosynthesis. Cell wall formation. Adds enolpyruvyl to UDP-N-acetylglucosamine. In Aquifex aeolicus (strain VF5), this protein is UDP-N-acetylglucosamine 1-carboxyvinyltransferase.